Here is a 234-residue protein sequence, read N- to C-terminus: Fibrillarin-like rRNA/tRNA 2'-O-methyltransferase (234 aa).

S-adenosyl-L-methionine contacts are provided by residues 91-92 (TT), 110-111 (EF), 137-138 (DA), and 157-160 (DVAQ).

It belongs to the methyltransferase superfamily. Fibrillarin family. Interacts with nop5. Component of box C/D small ribonucleoprotein (sRNP) particles that contain rpl7ae, FlpA and nop5, plus a guide RNA.

Its function is as follows. Involved in pre-rRNA and tRNA processing. Utilizes the methyl donor S-adenosyl-L-methionine to catalyze the site-specific 2'-hydroxyl methylation of ribose moieties in rRNA and tRNA. Site specificity is provided by a guide RNA that base pairs with the substrate. Methylation occurs at a characteristic distance from the sequence involved in base pairing with the guide RNA. This Pyrobaculum calidifontis (strain DSM 21063 / JCM 11548 / VA1) protein is Fibrillarin-like rRNA/tRNA 2'-O-methyltransferase.